The sequence spans 185 residues: Male-enhanced antigen 1 (185 aa).

Disordered regions lie at residues 1-90 and 104-134; these read MGPE…VGDG and GLHLPDPPLESEDEDEEGATALNNHSSIPMD. 2 stretches are compositionally biased toward acidic residues: residues 50–60 and 112–121; these read SSEEPEEEQEE and LESEDEDEEG. The residue at position 114 (Ser114) is a Phosphoserine.

Highly expressed in testis.

In terms of biological role, may play an important role in spermatogenesis and/or testis development. This chain is Male-enhanced antigen 1 (MEA1), found in Homo sapiens (Human).